A 213-amino-acid chain; its full sequence is MAERSSNGYKEVPVRQSEESTIAEEEKDTLLEARSYSRRDRKRSRSKAVWFLIALLLLSNIGLLGGLIHYFRKTHHKEKDVPWLPPKTVGRGFVNINNDTALPDQPGLDQSLPHQRAMISVFHQLHCIYMTREGYYAAREGNLDQVNAAHLMHCWDYLRQAIMCHADTTLEWIPAPPNDKGSTGWGVEHTCGDFDAIARWAEDNRLKTTYGIH.

The disordered stretch occupies residues 1–26 (MAERSSNGYKEVPVRQSEESTIAEEE). A helical membrane pass occupies residues 48-68 (AVWFLIALLLLSNIGLLGGLI). N-linked (GlcNAc...) asparagine glycosylation is present at asparagine 98. 2 consecutive short sequence motifs (HXXHC) follow at residues 123 to 127 (HQLHC) and 150 to 154 (HLMHC).

Belongs to the ustYa family.

It localises to the membrane. The protein operates within mycotoxin biosynthesis. Functionally, oxidase; part of the gene cluster that mediates the biosynthesis of the secondary metabolite ustiloxin B, an antimitotic tetrapeptide. First, ustA is processed by the subtilisin-like endoprotease Kex2 that is outside the ustiloxin B gene cluster, at the C-terminal side of Arg-Lys, after transfer to Golgi apparatus through the endoplasmic reticulum (ER). Cleavage by KEX2 generates 16 peptides YAIG-I to YAIG-XVI. To process the precursor peptide further, at least two peptidases are necessary to cleave the N-terminal and C-terminal sides of the Tyr-Ala-Ile-Gly core peptide which serves as backbone for the synthesis of ustiloxin B, through cyclization and modification of the tyrosine with a non-protein coding amino acid, norvaline. One of the two peptidases must be the serine peptidase ustP; and the other pepdidase is probably ustH. Macrocyclization of the core peptide derived from ustA requires the tyrosinase ustQ, as well as the homologous oxidases ustYa and ustYb, and leads to the production of the first cyclization product N-desmethylustiloxin F. For the formation of N-desmethylustiloxin F, three oxidation steps are required, hydroxylation at the benzylic position, hydroxylation at either the aromatic ring of Tyr or beta-position of Ile, and oxidative cyclization. UstQ may catalyze the oxidation of a phenol moiety, whereas the ustYa and ustYb are most likely responsible for the remaining two-step oxidations. N-desmethylustiloxin F is then methylated by ustM to yield ustiloxin F which in turn substrate of the cytochrome P450 monooxygenase ustC which catalyzes the formation of S-deoxyustiloxin H. The flavoprotein monooxygenases ustF1 and ustF2 then participate in the modification of the side chain of S-deoxyustiloxin H, leading to the synthesis of an oxime intermediate, via ustiloxin H. Finally, carboxylative dehydration performed by the cysteine desulfurase-like protein ustD yields ustiloxin B. The protein is Oxidase ustYa of Aspergillus flavus (strain ATCC 200026 / FGSC A1120 / IAM 13836 / NRRL 3357 / JCM 12722 / SRRC 167).